Here is a 664-residue protein sequence, read N- to C-terminus: Exoribonuclease 2 (664 aa).

The RNB domain occupies 193–521 (RIDMTHIPFV…INHRMLKALI (329 aa)). Positions 568 to 650 (QTLFTGEIFD…ENRSLVAKPT (83 aa)) constitute an S1 motif domain.

Belongs to the RNR ribonuclease family. RNase II subfamily.

It is found in the cytoplasm. It catalyses the reaction Exonucleolytic cleavage in the 3'- to 5'-direction to yield nucleoside 5'-phosphates.. Its function is as follows. Involved in mRNA degradation. Hydrolyzes single-stranded polyribonucleotides processively in the 3' to 5' direction. This chain is Exoribonuclease 2, found in Vibrio vulnificus (strain YJ016).